The primary structure comprises 200 residues: NADH-quinone oxidoreductase subunit C (200 aa).

It belongs to the complex I 30 kDa subunit family. In terms of assembly, NDH-1 is composed of 14 different subunits. Subunits NuoB, C, D, E, F, and G constitute the peripheral sector of the complex.

The protein resides in the cell inner membrane. The catalysed reaction is a quinone + NADH + 5 H(+)(in) = a quinol + NAD(+) + 4 H(+)(out). In terms of biological role, NDH-1 shuttles electrons from NADH, via FMN and iron-sulfur (Fe-S) centers, to quinones in the respiratory chain. The immediate electron acceptor for the enzyme in this species is believed to be ubiquinone. Couples the redox reaction to proton translocation (for every two electrons transferred, four hydrogen ions are translocated across the cytoplasmic membrane), and thus conserves the redox energy in a proton gradient. The chain is NADH-quinone oxidoreductase subunit C from Ralstonia pickettii (strain 12J).